We begin with the raw amino-acid sequence, 242 residues long: UPF0073 membrane protein Rv1085c (242 aa).

A run of 7 helical transmembrane segments spans residues 42–62, 67–87, 108–128, 133–153, 159–179, 186–206, and 222–242; these read VYSA…SWAV, AGLT…VSAT, SMIF…ALPA, VVLS…MCWP, VGVP…ATIL, ALVL…LYAV, and FHAC…FVVF.

It belongs to the UPF0073 (Hly-III) family.

It is found in the cell membrane. In Mycobacterium tuberculosis (strain ATCC 25618 / H37Rv), this protein is UPF0073 membrane protein Rv1085c.